The primary structure comprises 266 residues: Glutamate racemase (266 aa).

Substrate contacts are provided by residues Asp9–Ser10 and Tyr41–Gly42. Cys72 serves as the catalytic Proton donor/acceptor. Asn73 to Thr74 lines the substrate pocket. The active-site Proton donor/acceptor is Cys184. Thr185–His186 is a binding site for substrate.

This sequence belongs to the aspartate/glutamate racemases family.

It catalyses the reaction L-glutamate = D-glutamate. It participates in cell wall biogenesis; peptidoglycan biosynthesis. Provides the (R)-glutamate required for cell wall biosynthesis. This chain is Glutamate racemase, found in Staphylococcus carnosus (strain TM300).